A 610-amino-acid chain; its full sequence is Atypical kinase COQ8, mitochondrial (610 aa).

Residues 98-111 show a composition bias toward basic and acidic residues; the sequence is GVKHLQEQSSKEIK. The segment at 98–144 is disordered; it reads GVKHLQEQSSKEIKNPISQPILPNKKDEISPAKPSAIDSSIKDVTKS.

The protein belongs to the protein kinase superfamily. ADCK protein kinase family.

Its subcellular location is the mitochondrion. Its pathway is cofactor biosynthesis; ubiquinone biosynthesis. Functionally, atypical kinase involved in the biosynthesis of coenzyme Q, also named ubiquinone, an essential lipid-soluble electron transporter for aerobic cellular respiration. Its substrate specificity is still unclear: may act as a protein kinase that mediates phosphorylation of coq3. According to other reports, acts as a small molecule kinase, possibly a lipid kinase that phosphorylates a prenyl lipid in the ubiquinone biosynthesis pathway, as suggested by its ability to bind coenzyme Q lipid intermediates. The protein is Atypical kinase COQ8, mitochondrial of Schizosaccharomyces pombe (strain 972 / ATCC 24843) (Fission yeast).